Consider the following 946-residue polypeptide: Alanine--tRNA ligase, cytoplasmic (946 aa).

4 residues coordinate Zn(2+): histidine 591, histidine 595, cysteine 710, and histidine 714.

This sequence belongs to the class-II aminoacyl-tRNA synthetase family. As to quaternary structure, monomer. The cofactor is Zn(2+).

The protein localises to the cytoplasm. The catalysed reaction is tRNA(Ala) + L-alanine + ATP = L-alanyl-tRNA(Ala) + AMP + diphosphate. Its function is as follows. Catalyzes the attachment of alanine to tRNA(Ala) in a two-step reaction: alanine is first activated by ATP to form Ala-AMP and then transferred to the acceptor end of tRNA(Ala). Also edits incorrectly charged tRNA(Ala) via its editing domain. This Dictyostelium discoideum (Social amoeba) protein is Alanine--tRNA ligase, cytoplasmic (alaS).